Reading from the N-terminus, the 120-residue chain is Large ribosomal subunit protein eL18 (120 aa).

Belongs to the eukaryotic ribosomal protein eL18 family. Part of the 50S ribosomal subunit.

In Pyrococcus furiosus (strain ATCC 43587 / DSM 3638 / JCM 8422 / Vc1), this protein is Large ribosomal subunit protein eL18.